The primary structure comprises 502 residues: Bone morphogenetic protein receptor type-1B (502 aa).

A signal peptide spans 1-13 (MLLRSSGKLNVGT). A disordered region spans residues 1–24 (MLLRSSGKLNVGTKKEDGESTAPT). Residues 14–126 (KKEDGESTAP…DFVDGPIHHK (113 aa)) lie on the Extracellular side of the membrane. Disulfide bonds link Cys32–Cys53, Cys34–Cys38, Cys47–Cys71, Cys81–Cys95, and Cys96–Cys102. The chain crosses the membrane as a helical span at residues 127–148 (ALLISVTVCSLLLVLIILFCYF). Residues 149–502 (RYKRQEARPR…KMSESQDIKL (354 aa)) lie on the Cytoplasmic side of the membrane. The region spanning 174–203 (ESLRDLIEQSQSSGSGSGLPLLVQRTIAKQ) is the GS domain. Residues 204–494 (IQMVKQIGKG…LRVKKTLAKM (291 aa)) enclose the Protein kinase domain. Residues 210 to 218 (IGKGRYGEV) and Lys231 contribute to the ATP site. Asp332 acts as the Proton acceptor in catalysis.

It belongs to the protein kinase superfamily. TKL Ser/Thr protein kinase family. TGFB receptor subfamily. As to quaternary structure, interacts with high affinity with GDF5; positively regulates chondrocyte differentiation. Interacts with SCUBE3. Interacts with TSC22D1/TSC-22. Interacts with TGFBR3. Mg(2+) is required as a cofactor. The cofactor is Mn(2+). Post-translationally, autophosphorylated.

It is found in the cell membrane. It carries out the reaction L-threonyl-[receptor-protein] + ATP = O-phospho-L-threonyl-[receptor-protein] + ADP + H(+). It catalyses the reaction L-seryl-[receptor-protein] + ATP = O-phospho-L-seryl-[receptor-protein] + ADP + H(+). On ligand binding, forms a receptor complex consisting of two type II and two type I transmembrane serine/threonine kinases. Type II receptors phosphorylate and activate type I receptors which autophosphorylate, then bind and activate SMAD transcriptional regulators. Receptor for BMP7/OP-1. Receptor for GDF5. Positively regulates chondrocyte differentiation through GDF5 interaction. The protein is Bone morphogenetic protein receptor type-1B (Bmpr1b) of Mus musculus (Mouse).